We begin with the raw amino-acid sequence, 491 residues long: (R)-citramalate synthase CimA (491 aa).

Residues 3–254 (VRIFDTTLRD…DTKIKMEKLY (252 aa)) enclose the Pyruvate carboxyltransferase domain.

The protein belongs to the alpha-IPM synthase/homocitrate synthase family. In terms of assembly, homodimer.

It catalyses the reaction pyruvate + acetyl-CoA + H2O = (3R)-citramalate + CoA + H(+). The protein operates within amino-acid biosynthesis; L-isoleucine biosynthesis; 2-oxobutanoate from pyruvate: step 1/3. Catalyzes the condensation of pyruvate and acetyl-coenzyme A to form (R)-citramalate. The sequence is that of (R)-citramalate synthase CimA (cimA) from Methanocaldococcus jannaschii (strain ATCC 43067 / DSM 2661 / JAL-1 / JCM 10045 / NBRC 100440) (Methanococcus jannaschii).